A 375-amino-acid chain; its full sequence is Histidine biosynthesis bifunctional protein HisB (375 aa).

The histidinol-phosphatase stretch occupies residues 1-168 (MTPIVFIDRD…GIAHTLADAP (168 aa)). D8 functions as the Nucleophile in the catalytic mechanism. Mg(2+) contacts are provided by D8, D10, and D128. D10 serves as the catalytic Proton donor. Residues 169 to 375 (RRAVVQRHTK…HVLPSTKGAL (207 aa)) form an imidazoleglycerol-phosphate dehydratase region.

It in the N-terminal section; belongs to the histidinol-phosphatase family. The protein in the C-terminal section; belongs to the imidazoleglycerol-phosphate dehydratase family. The cofactor is Mg(2+).

The protein localises to the cytoplasm. The enzyme catalyses D-erythro-1-(imidazol-4-yl)glycerol 3-phosphate = 3-(imidazol-4-yl)-2-oxopropyl phosphate + H2O. The catalysed reaction is L-histidinol phosphate + H2O = L-histidinol + phosphate. Its pathway is amino-acid biosynthesis; L-histidine biosynthesis; L-histidine from 5-phospho-alpha-D-ribose 1-diphosphate: step 6/9. It functions in the pathway amino-acid biosynthesis; L-histidine biosynthesis; L-histidine from 5-phospho-alpha-D-ribose 1-diphosphate: step 8/9. The chain is Histidine biosynthesis bifunctional protein HisB from Xylella fastidiosa (strain 9a5c).